Consider the following 130-residue polypeptide: MEDTIRPLNYADIETSGPINLLETTNNLKSSLKKFSQKAKGSHISRERIHHFRKWKNKTESLSENHLKPPPDVDSLCFSNCFQPDALSGNVFLPPRSSNMYWNEKQLQLEMEILKFLSLNTSNECCTSDD.

This is an uncharacterized protein from Saccharomyces cerevisiae (strain ATCC 204508 / S288c) (Baker's yeast).